The sequence spans 74 residues: Cytochrome b559 subunit alpha (74 aa).

A helical membrane pass occupies residues 22–36; it reads VIHTVTIPSLFVAGW. Histidine 24 provides a ligand contact to heme.

The protein belongs to the PsbE/PsbF family. In terms of assembly, heterodimer of an alpha subunit and a beta subunit. PSII is composed of 1 copy each of membrane proteins PsbA, PsbB, PsbC, PsbD, PsbE, PsbF, PsbH, PsbI, PsbJ, PsbK, PsbL, PsbM, PsbT, PsbX, PsbY, PsbZ, Psb30/Ycf12, at least 3 peripheral proteins of the oxygen-evolving complex and a large number of cofactors. It forms dimeric complexes. Heme b is required as a cofactor.

The protein localises to the plastid. It localises to the cyanelle thylakoid membrane. In terms of biological role, this b-type cytochrome is tightly associated with the reaction center of photosystem II (PSII). PSII is a light-driven water:plastoquinone oxidoreductase that uses light energy to abstract electrons from H(2)O, generating O(2) and a proton gradient subsequently used for ATP formation. It consists of a core antenna complex that captures photons, and an electron transfer chain that converts photonic excitation into a charge separation. The sequence is that of Cytochrome b559 subunit alpha from Cyanophora paradoxa.